The chain runs to 216 residues: UDP-N-acetylglucosamine transferase subunit ALG14 (216 aa).

Topologically, residues 1–3 (MVC) are lumenal. A helical membrane pass occupies residues 4-24 (VLVLAAAAGAVAVFLILRIWV). Over 25 to 216 (VLRSMDVTPR…PKSVYLGRIV (192 aa)) the chain is Cytoplasmic.

Belongs to the ALG14 family. In terms of assembly, forms with ALG13 the active heterodimeric UDP-N-acetylglucosamine transferase complex.

The protein localises to the endoplasmic reticulum membrane. Its function is as follows. Part of the UDP-N-acetylglucosamine transferase complex that operates in the biosynthetic pathway of dolichol-linked oligosaccharides, the glycan precursors employed in protein asparagine (N)-glycosylation. The assembly of dolichol-linked oligosaccharides begins on the cytosolic side of the endoplasmic reticulum membrane and finishes in its lumen. The sequential addition of sugars to dolichol pyrophosphate produces dolichol-linked oligosaccharides containing fourteen sugars, including two GlcNAcs, nine mannoses and three glucoses. Once assembled, the oligosaccharides are transferred from the lipid to nascent proteins by oligosaccharyltransferases. Functions as a protein-membrane adapter recruiting ALG13 at the cytoplasmic face of the endoplasmic reticulum, where the complex catalyzes the second step of dolichol pyrophosphate biosynthesis, transferring a beta1,4-linked N-acetylglucosamine (GlcNAc) from UDP-GlcNAc to GlcNAc-pyrophosphatedolichol (Gn-PDol) to produce N,N'-diacetylchitobiosyl diphosphodolichol. N,N'-diacetylchitobiosyl diphosphodolichol is a substrate for ALG1, the following enzyme in the biosynthetic pathway. This Homo sapiens (Human) protein is UDP-N-acetylglucosamine transferase subunit ALG14.